The sequence spans 158 residues: MQKIPLTVRGAELLKQELQQLKSVARPEVIEAIAEARSHGDLSENAEYEAAKERQGFIEGRISELEHKLSVAHIINPTEIHAEGKIVFGTTVTLEDLETEEHVTYQIVGEDEADIKQGKIYVGSPIARALIGKEEGDTAEVQAPGGVREYDIIEVRYI.

Positions 46–66 (AEYEAAKERQGFIEGRISELE) form a coiled coil.

It belongs to the GreA/GreB family.

Its function is as follows. Necessary for efficient RNA polymerase transcription elongation past template-encoded arresting sites. The arresting sites in DNA have the property of trapping a certain fraction of elongating RNA polymerases that pass through, resulting in locked ternary complexes. Cleavage of the nascent transcript by cleavage factors such as GreA or GreB allows the resumption of elongation from the new 3'terminus. GreA releases sequences of 2 to 3 nucleotides. The chain is Transcription elongation factor GreA from Neisseria meningitidis serogroup A / serotype 4A (strain DSM 15465 / Z2491).